A 415-amino-acid chain; its full sequence is Trehalose synthase (415 aa).

The protein belongs to the glycosyltransferase group 1 family. Glycosyltransferase 4 subfamily. As to quaternary structure, homodimer. It depends on Mg(2+) as a cofactor.

The catalysed reaction is an NDP-alpha-D-glucose + D-glucose = alpha,alpha-trehalose + a ribonucleoside 5'-diphosphate + H(+). Its function is as follows. Synthesizes trehalose from ADP-, UDP- or GDP-glucose and glucose. The protein is Trehalose synthase of Pyrococcus horikoshii (strain ATCC 700860 / DSM 12428 / JCM 9974 / NBRC 100139 / OT-3).